A 511-amino-acid polypeptide reads, in one-letter code: MTIILKPGSVPLETLEKIYREGLPVRIDPAFHAGIEKAAARIAEIAAGDAPVYGINTGFGKLASIRIAAGDVATLQRNLILSHCCGVGEPLSENIVRLIMALKLVSLGRGASGVRLEVITLIEAMLEKGVIPMIPEKGSVGASGDLAPLAHMTAAMIGEGEAFYRGERLSGAKALGKAGLKPVVLAAKEGLALINGTQTSTALALAGLFRAHRAARTALITGALSTDAAMGSDAPFHEEIHQLRGHKGQIDAGRALRTLLEGSAIRRSHLEGDQRVQDPYCIRCQPQVDGACLDILRQAARTLEIEANAVTDNPLVLSDGRAVSGGNFHAEPVAFAADQIALAVCEIGAISQRRIALLVDPSLSFGLPAFLARKPGLNSGLMIAEVTSAALMSENKQMAHPASVDSTPTSANQEDHVSMACHGARRLLQMTANLNAIIGIEALTGALGVELRKPLTTSAELAKVIAALRAKVATLEEDRYMADDLKAAAELVADGTLSGVISAGILPDLEA.

Positions 142–144 form a cross-link, 5-imidazolinone (Ala-Gly); the sequence is ASG. Serine 143 bears the 2,3-didehydroalanine (Ser) mark.

This sequence belongs to the PAL/histidase family. Contains an active site 4-methylidene-imidazol-5-one (MIO), which is formed autocatalytically by cyclization and dehydration of residues Ala-Ser-Gly.

It localises to the cytoplasm. The catalysed reaction is L-histidine = trans-urocanate + NH4(+). It participates in amino-acid degradation; L-histidine degradation into L-glutamate; N-formimidoyl-L-glutamate from L-histidine: step 1/3. The chain is Histidine ammonia-lyase from Brucella abortus (strain S19).